Consider the following 121-residue polypeptide: Large ribosomal subunit protein bL12 (121 aa).

The protein belongs to the bacterial ribosomal protein bL12 family. As to quaternary structure, homodimer. Part of the ribosomal stalk of the 50S ribosomal subunit. Forms a multimeric L10(L12)X complex, where L10 forms an elongated spine to which 2 to 4 L12 dimers bind in a sequential fashion. Binds GTP-bound translation factors.

Its function is as follows. Forms part of the ribosomal stalk which helps the ribosome interact with GTP-bound translation factors. Is thus essential for accurate translation. The protein is Large ribosomal subunit protein bL12 of Mesomycoplasma hyopneumoniae (strain 232) (Mycoplasma hyopneumoniae).